We begin with the raw amino-acid sequence, 298 residues long: UDP-N-acetylenolpyruvoylglucosamine reductase (298 aa).

One can recognise an FAD-binding PCMH-type domain in the interval 26 to 191 (KTGGEAEYLA…LSATFSLKPG (166 aa)). R170 is an active-site residue. The Proton donor role is filled by S220. The active site involves E290.

This sequence belongs to the MurB family. FAD serves as cofactor.

It localises to the cytoplasm. The catalysed reaction is UDP-N-acetyl-alpha-D-muramate + NADP(+) = UDP-N-acetyl-3-O-(1-carboxyvinyl)-alpha-D-glucosamine + NADPH + H(+). Its pathway is cell wall biogenesis; peptidoglycan biosynthesis. In terms of biological role, cell wall formation. This chain is UDP-N-acetylenolpyruvoylglucosamine reductase, found in Lactobacillus acidophilus (strain ATCC 700396 / NCK56 / N2 / NCFM).